The primary structure comprises 838 residues: Protein translocase subunit SecA (838 aa).

Residues Q86, 104 to 108 (GEGKT), and D493 contribute to the ATP site. Disordered stretches follow at residues 517–536 (RRID…PGSS) and 789–838 (KVAE…CCGQ). Over residues 801-819 (TDGDSKAKRQPVRKKETVG) the composition is skewed to basic and acidic residues. C824, C826, C835, and C836 together coordinate Zn(2+).

Belongs to the SecA family. As to quaternary structure, monomer and homodimer. Part of the essential Sec protein translocation apparatus which comprises SecA, SecYEG and auxiliary proteins SecDF. Other proteins may also be involved. Zn(2+) serves as cofactor.

It is found in the cell membrane. It localises to the cytoplasm. The catalysed reaction is ATP + H2O + cellular proteinSide 1 = ADP + phosphate + cellular proteinSide 2.. Functionally, part of the Sec protein translocase complex. Interacts with the SecYEG preprotein conducting channel. Has a central role in coupling the hydrolysis of ATP to the transfer of proteins into and across the cell membrane, serving as an ATP-driven molecular motor driving the stepwise translocation of polypeptide chains across the membrane. This chain is Protein translocase subunit SecA, found in Halalkalibacterium halodurans (strain ATCC BAA-125 / DSM 18197 / FERM 7344 / JCM 9153 / C-125) (Bacillus halodurans).